The sequence spans 445 residues: Proton extrusion protein PxcA (445 aa).

4 helical membrane-spanning segments follow: residues 227–247, 322–342, 369–389, and 405–425; these read FILLLIIVPLLTQQLTKTFLI, AIANIFADICSLIAFGFVVAF, LIILFTDIFVGFHSPHGWEVI, and FNFLFIATFPVILDTVLKYWI.

It belongs to the CemA family.

Its subcellular location is the cell inner membrane. Functionally, required for H(+) efflux immediately after light irradiation to form a rapid H(+) concentration gradient across the thylakoid membranes. Together with PxcL, contributes to transient H(+) uptake following dark to light transition. This Microcystis aeruginosa (strain NIES-843 / IAM M-2473) protein is Proton extrusion protein PxcA.